The sequence spans 286 residues: Probable endonuclease 4 (286 aa).

Zn(2+) contacts are provided by H67, H107, E144, D178, H181, H215, D228, H230, and E260.

Belongs to the AP endonuclease 2 family. Zn(2+) serves as cofactor.

It catalyses the reaction Endonucleolytic cleavage to 5'-phosphooligonucleotide end-products.. Functionally, endonuclease IV plays a role in DNA repair. It cleaves phosphodiester bonds at apurinic or apyrimidinic (AP) sites, generating a 3'-hydroxyl group and a 5'-terminal sugar phosphate. The polypeptide is Probable endonuclease 4 (Chloroflexus aggregans (strain MD-66 / DSM 9485)).